The primary structure comprises 142 residues: HTH-type transcriptional regulator MntR (142 aa).

The 63-residue stretch at 1–63 folds into the HTH dtxR-type domain; the sequence is MPTPSMEDYI…YEKYRGLILT (63 aa). The Mn(2+) site is built by Asp-8, Glu-11, His-77, Glu-99, Glu-102, and His-103.

The protein belongs to the DtxR/MntR family. In terms of assembly, homodimer.

The protein localises to the cytoplasm. With respect to regulation, DNA binding is strongly activated by Mn(2+). In terms of biological role, central regulator of manganese homeostasis. This is HTH-type transcriptional regulator MntR from Listeria innocua serovar 6a (strain ATCC BAA-680 / CLIP 11262).